A 267-amino-acid chain; its full sequence is Imidazole glycerol phosphate synthase subunit HisF (267 aa).

Residues D22 and D141 contribute to the active site.

It belongs to the HisA/HisF family. As to quaternary structure, heterodimer of HisH and HisF.

The protein localises to the cytoplasm. The catalysed reaction is 5-[(5-phospho-1-deoxy-D-ribulos-1-ylimino)methylamino]-1-(5-phospho-beta-D-ribosyl)imidazole-4-carboxamide + L-glutamine = D-erythro-1-(imidazol-4-yl)glycerol 3-phosphate + 5-amino-1-(5-phospho-beta-D-ribosyl)imidazole-4-carboxamide + L-glutamate + H(+). The protein operates within amino-acid biosynthesis; L-histidine biosynthesis; L-histidine from 5-phospho-alpha-D-ribose 1-diphosphate: step 5/9. Functionally, IGPS catalyzes the conversion of PRFAR and glutamine to IGP, AICAR and glutamate. The HisF subunit catalyzes the cyclization activity that produces IGP and AICAR from PRFAR using the ammonia provided by the HisH subunit. This chain is Imidazole glycerol phosphate synthase subunit HisF, found in Mycobacterium tuberculosis (strain ATCC 25177 / H37Ra).